The chain runs to 678 residues: Pentatricopeptide repeat-containing protein At5g39980, chloroplastic (678 aa).

The N-terminal 64 residues, 1–64 (MYIEIASSSS…NKKVWRKQPE (64 aa)), are a transit peptide targeting the chloroplast. 14 PPR repeats span residues 154–188 (SVFA…ALAP), 189–223 (DRYT…RVSG), 224–258 (DLVL…GITP), 259–293 (DLVA…GVLP), 294–328 (NTVS…NCAL), 329–363 (DLTT…DIEP), 364–398 (NVVS…DIEQ), 399–433 (NVVT…GIEP), 434–468 (NAIT…GVEI), 469–503 (DQVL…DNIP), 535–569 (DISV…GYFP), 570–604 (DSNV…GCVF), 605–638 (PDEV…DPNV), and 639–674 (NSKE…GILK).

This sequence belongs to the PPR family. P subfamily.

It is found in the plastid. Its subcellular location is the chloroplast. This is Pentatricopeptide repeat-containing protein At5g39980, chloroplastic from Arabidopsis thaliana (Mouse-ear cress).